Here is a 311-residue protein sequence, read N- to C-terminus: Porphobilinogen deaminase (311 aa).

C243 is modified (S-(dipyrrolylmethanemethyl)cysteine).

It belongs to the HMBS family. In terms of assembly, monomer. The cofactor is dipyrromethane.

It catalyses the reaction 4 porphobilinogen + H2O = hydroxymethylbilane + 4 NH4(+). Its pathway is porphyrin-containing compound metabolism; protoporphyrin-IX biosynthesis; coproporphyrinogen-III from 5-aminolevulinate: step 2/4. Functionally, tetrapolymerization of the monopyrrole PBG into the hydroxymethylbilane pre-uroporphyrinogen in several discrete steps. The polypeptide is Porphobilinogen deaminase (Blochmanniella floridana).